The primary structure comprises 148 residues: UPF0251 protein Cbei_2962 (148 aa).

This sequence belongs to the UPF0251 family.

This chain is UPF0251 protein Cbei_2962, found in Clostridium beijerinckii (strain ATCC 51743 / NCIMB 8052) (Clostridium acetobutylicum).